The sequence spans 230 residues: Probable dual specificity protein phosphatase DDB_G0283417 (230 aa).

The Tyrosine-protein phosphatase domain occupies asparagine 78–phenylalanine 230. The Phosphocysteine intermediate role is filled by cysteine 174.

The protein belongs to the protein-tyrosine phosphatase family. Non-receptor class dual specificity subfamily.

It carries out the reaction O-phospho-L-tyrosyl-[protein] + H2O = L-tyrosyl-[protein] + phosphate. The catalysed reaction is O-phospho-L-seryl-[protein] + H2O = L-seryl-[protein] + phosphate. It catalyses the reaction O-phospho-L-threonyl-[protein] + H2O = L-threonyl-[protein] + phosphate. Has a dual specificity toward Ser/Thr and Tyr-containing proteins. The sequence is that of Probable dual specificity protein phosphatase DDB_G0283417 from Dictyostelium discoideum (Social amoeba).